A 1187-amino-acid chain; its full sequence is Non-receptor tyrosine-protein kinase TYK2 (1187 aa).

Residues G26–S431 enclose the FERM domain. Residue Y292 is modified to Phosphotyrosine. A disordered region spans residues K335–A366. Over residues S339 to A349 the composition is skewed to polar residues. The 80-residue stretch at G450–L529 folds into the SH2; atypical domain. Phosphoserine is present on residues S499 and S525. The 287-residue stretch at I589–A875 folds into the Protein kinase 1 domain. Y604 is modified (phosphotyrosine). A disordered region spans residues V610 to P629. Acidic residues predominate over residues G614–P626. Position 884 is a phosphoserine (S884). The 280-residue stretch at L897–Y1176 folds into the Protein kinase 2 domain. ATP-binding positions include L903 to V911 and K930. The active-site Proton acceptor is the D1023. Y1054 carries the phosphotyrosine; by autocatalysis modification. Y1055 carries the post-translational modification Phosphotyrosine.

It belongs to the protein kinase superfamily. Tyr protein kinase family. JAK subfamily. Interacts (via FERM domain) with JAKMIP1. Interacts with PIK3R1; this interaction is important for cell migration. Interacts with MPL/TPOR. As to quaternary structure, (Microbial infection) Interacts with Epstein-Barr virus protein LMP1; this interaction inhibits TYK2-mediated interferon signaling. In terms of assembly, (Microbial infection) Interacts with papillomavirus-18 protein E6; this interaction impairs JAK-STAT activation by interferon-alpha. (Microbial infection) Interacts with Epstein-Barr virus (EBV) tegument protein BGLF2; this interaction participates in the inhibition of type I IFN signaling by the virus. Phosphorylated. Phosphorylation by JAK1 at Tyr-1054 and Tyr-1055 induces kinase activation. Observed in all cell lines analyzed. Expressed in a variety of lymphoid and non-lymphoid cell lines.

The catalysed reaction is L-tyrosyl-[protein] + ATP = O-phospho-L-tyrosyl-[protein] + ADP + H(+). With respect to regulation, the protein kinase 1 domain (also termed pseudokinase domain) mediates autoinhibition of the TYK2 kinase domain. Functionally, tyrosine kinase of the non-receptor type involved in numerous cytokines and interferons signaling, which regulates cell growth, development, cell migration, innate and adaptive immunity. Plays both structural and catalytic roles in numerous interleukins and interferons (IFN-alpha/beta) signaling. Associates with heterodimeric cytokine receptor complexes and activates STAT family members including STAT1, STAT3, STAT4 or STAT6. The heterodimeric cytokine receptor complexes are composed of (1) a TYK2-associated receptor chain (IFNAR1, IL12RB1, IL10RB or IL13RA1), and (2) a second receptor chain associated either with JAK1 or JAK2. In response to cytokine-binding to receptors, phosphorylates and activates receptors (IFNAR1, IL12RB1, IL10RB or IL13RA1), creating docking sites for STAT members. In turn, recruited STATs are phosphorylated by TYK2 (or JAK1/JAK2 on the second receptor chain), form homo- and heterodimers, translocate to the nucleus, and regulate cytokine/growth factor responsive genes. Negatively regulates STAT3 activity by promototing phosphorylation at a specific tyrosine that differs from the site used for signaling. In Homo sapiens (Human), this protein is Non-receptor tyrosine-protein kinase TYK2 (TYK2).